Consider the following 136-residue polypeptide: NADPH-dependent 7-cyano-7-deazaguanine reductase (136 aa).

Cys-50 (thioimide intermediate) is an active-site residue. The active-site Proton donor is Asp-57. Residues 72–74 (YEL) and 91–92 (HE) contribute to the substrate site.

The protein belongs to the GTP cyclohydrolase I family. QueF type 1 subfamily.

Its subcellular location is the cytoplasm. The catalysed reaction is 7-aminomethyl-7-carbaguanine + 2 NADP(+) = 7-cyano-7-deazaguanine + 2 NADPH + 3 H(+). It functions in the pathway tRNA modification; tRNA-queuosine biosynthesis. Its function is as follows. Catalyzes the NADPH-dependent reduction of 7-cyano-7-deazaguanine (preQ0) to 7-aminomethyl-7-deazaguanine (preQ1). The protein is NADPH-dependent 7-cyano-7-deazaguanine reductase of Prochlorococcus marinus (strain MIT 9301).